A 99-amino-acid polypeptide reads, in one-letter code: Protein RnfH (99 aa).

It belongs to the UPF0125 (RnfH) family.

The chain is Protein RnfH from Buchnera aphidicola subsp. Acyrthosiphon pisum (strain 5A).